The primary structure comprises 268 residues: Glucosamine-6-phosphate deaminase (268 aa).

The Proton acceptor; for enolization step role is filled by Asp-72. The active-site For ring-opening step is Asp-141. His-143 functions as the Proton acceptor; for ring-opening step in the catalytic mechanism. Glu-148 serves as the catalytic For ring-opening step.

It belongs to the glucosamine/galactosamine-6-phosphate isomerase family. NagB subfamily. In terms of assembly, homohexamer.

The catalysed reaction is alpha-D-glucosamine 6-phosphate + H2O = beta-D-fructose 6-phosphate + NH4(+). The protein operates within amino-sugar metabolism; N-acetylneuraminate degradation; D-fructose 6-phosphate from N-acetylneuraminate: step 5/5. Its activity is regulated as follows. Allosterically activated by N-acetylglucosamine 6-phosphate (GlcNAc6P). Catalyzes the reversible isomerization-deamination of glucosamine 6-phosphate (GlcN6P) to form fructose 6-phosphate (Fru6P) and ammonium ion. The protein is Glucosamine-6-phosphate deaminase of Histophilus somni (strain 2336) (Haemophilus somnus).